The following is a 121-amino-acid chain: Small ribosomal subunit protein uS13 (121 aa).

The interval valine 97 to lysine 121 is disordered. Residues glutamine 100–lysine 121 show a composition bias toward basic residues.

The protein belongs to the universal ribosomal protein uS13 family. As to quaternary structure, part of the 30S ribosomal subunit. Forms a loose heterodimer with protein S19. Forms two bridges to the 50S subunit in the 70S ribosome.

Located at the top of the head of the 30S subunit, it contacts several helices of the 16S rRNA. In the 70S ribosome it contacts the 23S rRNA (bridge B1a) and protein L5 of the 50S subunit (bridge B1b), connecting the 2 subunits; these bridges are implicated in subunit movement. Contacts the tRNAs in the A and P-sites. The chain is Small ribosomal subunit protein uS13 from Synechococcus sp. (strain CC9311).